Consider the following 428-residue polypeptide: Serine--tRNA ligase (428 aa).

231-233 (TAE) lines the L-serine pocket. 262 to 264 (RAE) is a binding site for ATP. E285 is a binding site for L-serine. An ATP-binding site is contributed by 349–352 (EISS). S385 lines the L-serine pocket.

This sequence belongs to the class-II aminoacyl-tRNA synthetase family. Type-1 seryl-tRNA synthetase subfamily. Homodimer. The tRNA molecule binds across the dimer.

The protein localises to the cytoplasm. It catalyses the reaction tRNA(Ser) + L-serine + ATP = L-seryl-tRNA(Ser) + AMP + diphosphate + H(+). The catalysed reaction is tRNA(Sec) + L-serine + ATP = L-seryl-tRNA(Sec) + AMP + diphosphate + H(+). Its pathway is aminoacyl-tRNA biosynthesis; selenocysteinyl-tRNA(Sec) biosynthesis; L-seryl-tRNA(Sec) from L-serine and tRNA(Sec): step 1/1. Functionally, catalyzes the attachment of serine to tRNA(Ser). Is also able to aminoacylate tRNA(Sec) with serine, to form the misacylated tRNA L-seryl-tRNA(Sec), which will be further converted into selenocysteinyl-tRNA(Sec). The chain is Serine--tRNA ligase from Methylorubrum populi (strain ATCC BAA-705 / NCIMB 13946 / BJ001) (Methylobacterium populi).